The following is a 274-amino-acid chain: NH(3)-dependent NAD(+) synthetase (274 aa).

46–53 is a binding site for ATP; the sequence is GISGGQDS. Residue Asp52 coordinates Mg(2+). Arg140 contacts deamido-NAD(+). Thr160 is an ATP binding site. Glu165 contributes to the Mg(2+) binding site. Deamido-NAD(+) is bound by residues Lys173 and Asp180. 2 residues coordinate ATP: Lys189 and Thr211. 260 to 261 provides a ligand contact to deamido-NAD(+); it reads HK.

This sequence belongs to the NAD synthetase family. Homodimer.

It catalyses the reaction deamido-NAD(+) + NH4(+) + ATP = AMP + diphosphate + NAD(+) + H(+). It participates in cofactor biosynthesis; NAD(+) biosynthesis; NAD(+) from deamido-NAD(+) (ammonia route): step 1/1. Functionally, catalyzes the ATP-dependent amidation of deamido-NAD to form NAD. Uses ammonia as a nitrogen source. This Listeria innocua serovar 6a (strain ATCC BAA-680 / CLIP 11262) protein is NH(3)-dependent NAD(+) synthetase.